A 444-amino-acid polypeptide reads, in one-letter code: MLLDAGPQYPAIGVTTFGSSRHHSAADVTDREVGLGINPFADGMGAFKLNPGGHELASAGQTAFTSQAPGYAAALGHHHHPPHVGSYSSAAFNSTRDFLFRNRGFGEAAAASAQHSLFASAAGGFGGPHGHGDAAGHILFPGLHEQAAGHASPNVVNGQMRLGFSGDMYGRAEQYGQVTSPRSEHYASSQLHGYGHMNMNMAAHHGAGAFFRYMRQPIKQELICKWIEPEQLANPKKSCNKTFSTMHELVTHVTVEHVGGPEQSNHICFWEECPREGKPFKAKYKLVNHIRVHTGEKPFPCPFPGCGKVFARSENLKIHKRTHTGEKPFKCEFEGCDRRFANSSDRKKHMHVHTSDKPYLCKMCDKSYTHPSSLRKHMKVHESSSQGSQPSPAASSGYESSTPPTIVSPSTENQTASSLSPSSSAGHHTASHSTLTSNFNEWYV.

Residues 222-257 (LICKWIEPEQLANPKKSCNKTFSTMHELVTHVTVEH) form a C2H2-type 1 zinc finger. The C2H2-type 2; degenerate zinc-finger motif lies at 271–293 (EECPREGKPFKAKYKLVNHIRVH). 3 consecutive C2H2-type zinc fingers follow at residues 299-323 (FPCP…KRTH), 329-353 (FKCE…MHVH), and 359-381 (YLCK…MKVH). Positions 372-432 (SSLRKHMKVH…SSAGHHTASH (61 aa)) are disordered. Low complexity predominate over residues 383 to 432 (SSSQGSQPSPAASSGYESSTPPTIVSPSTENQTASSLSPSSSAGHHTASH).

This sequence belongs to the GLI C2H2-type zinc-finger protein family.

It localises to the nucleus. The protein resides in the cytoplasm. In terms of biological role, acts as a transcriptional activator. Involved in neurogenesis. Plays important roles in the early stage of organogenesis of the CNS, as well as during dorsal spinal cord development and maturation of the cerebellum. Binds to the minimal GLI-consensus sequence 5'-TGGGTGGTC-3'. The sequence is that of Zinc finger protein ZIC 1 (ZIC1) from Gallus gallus (Chicken).